Consider the following 347-residue polypeptide: Endophilin-A3 (347 aa).

The tract at residues 1–21 (MSVAGLKKQFHKASQLFSEKI) is membrane-binding amphipathic helix. The BAR domain occupies 18–249 (SEKISGAEGT…LELRISLASK (232 aa)). Residues 60 to 87 (PNPAYRAKLGMLNTVSKLRGQVKATGYP) are required for dimerization upon membrane association. The stretch at 180-201 (EEEIRQAVEKFEESKELAERSM) forms a coiled coil. The interval 218 to 254 (FVEAALDYHRQSTEILQELQSKLELRISLASKVPKRE) is interaction with ARC. The interval 255–288 (FMPKPVNMSSTDANGVGPSSSSKTPGTDTPADQP) is disordered. Positions 261–281 (NMSSTDANGVGPSSSSKTPGT) are enriched in polar residues. An SH3 domain is found at 285-344 (ADQPCCRGLYDFEPENEGELGFKEGDIITLTNQIDENWYEGMLRGESGFFPINYVEVIVP).

This sequence belongs to the endophilin family. Interacts with ARC, DNM1, SGIP1, SYNJ1 and DYDC1. Interacts with FASLG. Interacts with ATXN2. Interacts with BIN2.

The protein localises to the cytoplasm. It is found in the early endosome membrane. Its function is as follows. Implicated in endocytosis. May recruit other proteins to membranes with high curvature. In Mus musculus (Mouse), this protein is Endophilin-A3 (Sh3gl3).